The chain runs to 238 residues: tRNA (guanine-N(1)-)-methyltransferase (238 aa).

Residues glycine 110 and 129–134 (LGDFIL) each bind S-adenosyl-L-methionine.

Belongs to the RNA methyltransferase TrmD family. In terms of assembly, homodimer.

The protein localises to the cytoplasm. The enzyme catalyses guanosine(37) in tRNA + S-adenosyl-L-methionine = N(1)-methylguanosine(37) in tRNA + S-adenosyl-L-homocysteine + H(+). Functionally, specifically methylates guanosine-37 in various tRNAs. The sequence is that of tRNA (guanine-N(1)-)-methyltransferase from Clostridium botulinum (strain Eklund 17B / Type B).